The chain runs to 358 residues: Vanillin synthase (358 aa).

The first 21 residues, 1-21 (MARLLLLLVGVLIACAAGARA), serve as a signal peptide directing secretion. The propeptide at 22–140 (GSEFLAEDNP…RGNHKLTSAI (119 aa)) is activation peptide. Asn-125 carries N-linked (GlcNAc...) asparagine glycosylation. Disulfide bonds link Cys-162/Cys-205 and Cys-196/Cys-238. Cys-165 is an active-site residue. N-linked (GlcNAc...) asparagine glycosylation occurs at Asn-254. A disulfide bond links Cys-296 and Cys-346. Catalysis depends on residues His-305 and Asn-325.

This sequence belongs to the peptidase C1 family.

The enzyme catalyses (E)-ferulate + H2O = vanillin + acetate. The catalysed reaction is 4-O-beta-D-glucosyl-trans-ferulate + H2O = 4-O-beta-D-glucosyl-vanillin + acetate. The protein operates within aromatic compound metabolism; phenylpropanoid biosynthesis. In terms of biological role, involved in the biosynthesis of vanillin and derivative natural products. Catalyzes the double carbon bond cleavage of ferulic acid to vanillin and of respective glucosides. The sequence is that of Vanillin synthase from Glechoma hederacea (Ground-ivy).